The chain runs to 275 residues: Nitrogenase iron protein 1 (275 aa).

An ATP-binding site is contributed by 9 to 16; the sequence is GKGGIGKS. Position 97 (cysteine 97) interacts with [4Fe-4S] cluster. Arginine 100 carries the post-translational modification ADP-ribosylarginine; by dinitrogenase reductase ADP-ribosyltransferase. Cysteine 132 provides a ligand contact to [4Fe-4S] cluster.

This sequence belongs to the NifH/BchL/ChlL family. Homodimer. [4Fe-4S] cluster serves as cofactor. The reversible ADP-ribosylation of Arg-100 inactivates the nitrogenase reductase and regulates nitrogenase activity.

The enzyme catalyses N2 + 8 reduced [2Fe-2S]-[ferredoxin] + 16 ATP + 16 H2O = H2 + 8 oxidized [2Fe-2S]-[ferredoxin] + 2 NH4(+) + 16 ADP + 16 phosphate + 6 H(+). The key enzymatic reactions in nitrogen fixation are catalyzed by the nitrogenase complex, which has 2 components: the iron protein and the molybdenum-iron protein. The polypeptide is Nitrogenase iron protein 1 (nifH1) (Methanosarcina barkeri).